Reading from the N-terminus, the 1509-residue chain is DNA polymerase alpha catalytic subunit (1509 aa).

Residues Met1–Ile162 are disordered. Composition is skewed to basic and acidic residues over residues Glu21 to Gln35 and Glu42 to Ser79. A coiled-coil region spans residues Arg27–Asp67. Acidic residues predominate over residues Asp80–Ile123. Residues Arg127–Ser137 are compositionally biased toward basic residues. A compositionally biased stretch (basic and acidic residues) spans Lys138–Val147. Residues Lys148–Glu157 are compositionally biased toward basic residues. 2 coiled-coil regions span residues Ala234–Lys263 and Leu958–Gln989. Positions 1328, 1331, 1355, 1358, 1389, 1392, 1406, and 1411 each coordinate Zn(2+). The CysA-type zinc finger occupies Cys1328–Cys1358. Positions Cys1389–Cys1411 match the CysB motif motif.

Belongs to the DNA polymerase type-B family.

It is found in the nucleus. It catalyses the reaction DNA(n) + a 2'-deoxyribonucleoside 5'-triphosphate = DNA(n+1) + diphosphate. Functionally, polymerase alpha in a complex with DNA primase is a replicative polymerase. This is DNA polymerase alpha catalytic subunit (pola1) from Dictyostelium discoideum (Social amoeba).